A 180-amino-acid chain; its full sequence is Bifunctional protein PyrR (180 aa).

Substrate-binding positions include 39-40, 103-111, and Arg-136; these read TR and DDVLYTGRT. The short motif at 99–111 is the PRPP-binding element; that stretch reads VILIDDVLYTGRT.

It belongs to the purine/pyrimidine phosphoribosyltransferase family. PyrR subfamily. Homodimer and homohexamer; in equilibrium.

The catalysed reaction is UMP + diphosphate = 5-phospho-alpha-D-ribose 1-diphosphate + uracil. Functionally, regulates transcriptional attenuation of the pyrimidine nucleotide (pyr) operon by binding in a uridine-dependent manner to specific sites on pyr mRNA. This disrupts an antiterminator hairpin in the RNA and favors formation of a downstream transcription terminator, leading to a reduced expression of downstream genes. Also displays a weak uracil phosphoribosyltransferase activity which is not physiologically significant. This is Bifunctional protein PyrR from Halalkalibacterium halodurans (strain ATCC BAA-125 / DSM 18197 / FERM 7344 / JCM 9153 / C-125) (Bacillus halodurans).